A 292-amino-acid polypeptide reads, in one-letter code: Cyclin-dependent kinase 5 (292 aa).

In terms of domain architecture, Protein kinase spans 4-286; it reads YEKLEKIGEG…AEEALQHPYF (283 aa). Residues 10–18 and Lys33 each bind ATP; that span reads IGEGTYGTV. Tyr15 is subject to Phosphotyrosine; by ABL1, EPHA4 and FYN. Thr17 carries the phosphothreonine modification. N6-acetyllysine is present on Lys56. Phosphoserine is present on Ser72. Residue Asp126 is the Proton acceptor of the active site. A Phosphoserine modification is found at Ser159.

This sequence belongs to the protein kinase superfamily. CMGC Ser/Thr protein kinase family. CDC2/CDKX subfamily. Heterodimer composed of a catalytic subunit CDK5 and a regulatory subunit CDK5R1 (p25) and macromolecular complex composed of at least CDK5, CDK5R1 (p35) and CDK5RAP1 or CDK5RAP2 or CDK5RAP3. Only the heterodimer shows kinase activity. Under neurotoxic stress and neuronal injury conditions, p35 is cleaved by calpain to generate p25 that hyperactivates CDK5, that becomes functionally disabled and often toxic. Found in a trimolecular complex with CABLES1 and ABL1. Interacts with CABLES1 and CABLES2. Interacts with AATK and GSTP1. Binds to HDAC1 when in complex with p25. Interaction with myristoylation p35 promotes CDK5 association with membranes. Both isoforms 1 and 2 interacts with beta-catenin/CTNNB1. Interacts with delta-catenin/CTNND2 and APEX1. Interacts with P53/TP53 in neurons. Interacts with PTK2/FAK1. Interacts with EPHA4; may mediate the activation of NGEF by EPHA4. The complex p35/CDK5 interacts with CLOCK. Interacts with HTR6. In terms of processing, phosphorylation on Tyr-15 by ABL1 and FYN, and on Ser-159 by casein kinase 1 promotes kinase activity. By contrast, phosphorylation at Thr-14 inhibits activity. Phosphorylation at Ser-159 is essential for maximal catalytic activity. In terms of tissue distribution, expressed in hippocampal neuronal synaptic termini (at protein level). Expressed predominantly in post-mitotic neurons of the central and peripheral nervous system.

The protein localises to the cytoplasm. Its subcellular location is the nucleus. It is found in the cell membrane. The protein resides in the perikaryon. It localises to the cell projection. The protein localises to the lamellipodium. Its subcellular location is the growth cone. It is found in the postsynaptic density. The protein resides in the synapse. It catalyses the reaction L-seryl-[protein] + ATP = O-phospho-L-seryl-[protein] + ADP + H(+). It carries out the reaction L-threonyl-[protein] + ATP = O-phospho-L-threonyl-[protein] + ADP + H(+). Inhibited by 2-(1-ethyl-2-hydroxyethylamino)-6-benzylamino-9-isopropylpurine (roscovitine), 1-isopropyl-4-aminobenzyl-6-ether-linked benzimidazoles, resveratrol, AT-7519 and olomoucine. Activated by CDK5R1 (p35) and CDK5R2 (p39) during the development of the nervous system; degradation of CDK5R1 (p35) and CDK5R2 (p39) by proteasome result in down regulation of kinase activity, during this process, CDK5 phosphorylates p35 and induces its ubiquitination and subsequent degradation. Kinase activity is mainly determined by the amount of p35 available and subcellular location; reversible association to plasma membrane inhibits activity. Long-term inactivation as well as CDK5R1 (p25)-mediated hyperactivation of CDK5 triggers cell death. The pro-death activity of hyperactivated CDK5 is suppressed by membrane association of CDK5, via myristoylation of p35. Brain-derived neurotrophic factor, glial-derived neurotrophic factor, nerve growth factor (NGF), retinoic acid, laminin and neuregulin promote activity. Neurotoxicity enhances nuclear activity, thus leading to MEF2 phosphorylation and inhibition prior to apoptosis of cortical neurons. Repression by GSTP1 via p25/p35 translocation prevents neurodegeneration. Functionally, proline-directed serine/threonine-protein kinase essential for neuronal cell cycle arrest and differentiation and may be involved in apoptotic cell death in neuronal diseases by triggering abortive cell cycle re-entry. Interacts with D1 and D3-type G1 cyclins. Phosphorylates SRC, NOS3, VIM/vimentin, p35/CDK5R1, MEF2A, SIPA1L1, SH3GLB1, PXN, PAK1, MCAM/MUC18, SEPT5, SYN1, DNM1, AMPH, SYNJ1, CDK16, RAC1, RHOA, CDC42, TONEBP/NFAT5, MAPT/TAU, MAP1B, histone H1, p53/TP53, HDAC1, APEX1, PTK2/FAK1, huntingtin/HTT, ATM, MAP2, NEFH and NEFM. Regulates several neuronal development and physiological processes including neuronal survival, migration and differentiation, axonal and neurite growth, synaptogenesis, oligodendrocyte differentiation, synaptic plasticity and neurotransmission, by phosphorylating key proteins. Negatively regulates the CACNA1B/CAV2.2 -mediated Ca(2+) release probability at hippocampal neuronal soma and synaptic terminals. Activated by interaction with CDK5R1 (p35) and CDK5R2 (p39), especially in postmitotic neurons, and promotes CDK5R1 (p35) expression in an autostimulation loop. Phosphorylates many downstream substrates such as Rho and Ras family small GTPases (e.g. PAK1, RAC1, RHOA, CDC42) or microtubule-binding proteins (e.g. MAPT/TAU, MAP2, MAP1B), and modulates actin dynamics to regulate neurite growth and/or spine morphogenesis. Also phosphorylates exocytosis associated proteins such as MCAM/MUC18, SEPT5, SYN1, and CDK16/PCTAIRE1 as well as endocytosis associated proteins such as DNM1, AMPH and SYNJ1 at synaptic terminals. In the mature central nervous system (CNS), regulates neurotransmitter movements by phosphorylating substrates associated with neurotransmitter release and synapse plasticity; synaptic vesicle exocytosis, vesicles fusion with the presynaptic membrane, and endocytosis. Promotes cell survival by activating anti-apoptotic proteins BCL2 and STAT3, and negatively regulating of JNK3/MAPK10 activity. Phosphorylation of p53/TP53 in response to genotoxic and oxidative stresses enhances its stabilization by preventing ubiquitin ligase-mediated proteasomal degradation, and induces transactivation of p53/TP53 target genes, thus regulating apoptosis. Phosphorylation of p35/CDK5R1 enhances its stabilization by preventing calpain-mediated proteolysis producing p25/CDK5R1 and avoiding ubiquitin ligase-mediated proteasomal degradation. During aberrant cell-cycle activity and DNA damage, p25/CDK5 activity elicits cell-cycle activity and double-strand DNA breaks that precedes neuronal death by deregulating HDAC1. DNA damage triggered phosphorylation of huntingtin/HTT in nuclei of neurons protects neurons against polyglutamine expansion as well as DNA damage mediated toxicity. Phosphorylation of PXN reduces its interaction with PTK2/FAK1 in matrix-cell focal adhesions (MCFA) during oligodendrocytes (OLs) differentiation. Negative regulator of Wnt/beta-catenin signaling pathway. Activator of the GAIT (IFN-gamma-activated inhibitor of translation) pathway, which suppresses expression of a post-transcriptional regulon of proinflammatory genes in myeloid cells; phosphorylates the linker domain of glutamyl-prolyl tRNA synthetase (EPRS) in a IFN-gamma-dependent manner, the initial event in assembly of the GAIT complex. Phosphorylation of SH3GLB1 is required for autophagy induction in starved neurons. Phosphorylation of TONEBP/NFAT5 in response to osmotic stress mediates its rapid nuclear localization. MEF2 is inactivated by phosphorylation in nucleus in response to neurotoxin, thus leading to neuronal apoptosis. APEX1 AP-endodeoxyribonuclease is repressed by phosphorylation, resulting in accumulation of DNA damage and contributing to neuronal death. NOS3 phosphorylation down regulates NOS3-derived nitrite (NO) levels. SRC phosphorylation mediates its ubiquitin-dependent degradation and thus leads to cytoskeletal reorganization. May regulate endothelial cell migration and angiogenesis via the modulation of lamellipodia formation. Involved in dendritic spine morphogenesis by mediating the EFNA1-EPHA4 signaling. The complex p35/CDK5 participates in the regulation of the circadian clock by modulating the function of CLOCK protein: phosphorylates CLOCK at 'Thr-451' and 'Thr-461' and regulates the transcriptional activity of the CLOCK-BMAL1 heterodimer in association with altered stability and subcellular distribution. In Rattus norvegicus (Rat), this protein is Cyclin-dependent kinase 5.